The following is a 419-amino-acid chain: S-adenosylmethionine synthase (419 aa).

Histidine 14 is a binding site for ATP. Aspartate 16 is a binding site for Mg(2+). Residue glutamate 42 coordinates K(+). The L-methionine site is built by glutamate 55 and glutamine 98. The flexible loop stretch occupies residues 98 to 108 (QSQDIYQGVDR). ATP contacts are provided by residues 164-166 (DSK), 242-243 (KF), aspartate 251, 257-258 (RK), alanine 274, and lysine 278. An L-methionine-binding site is contributed by aspartate 251. Residue lysine 282 participates in L-methionine binding.

It belongs to the AdoMet synthase family. In terms of assembly, homotetramer; dimer of dimers. Requires Mg(2+) as cofactor. K(+) is required as a cofactor.

It localises to the cytoplasm. It catalyses the reaction L-methionine + ATP + H2O = S-adenosyl-L-methionine + phosphate + diphosphate. The protein operates within amino-acid biosynthesis; S-adenosyl-L-methionine biosynthesis; S-adenosyl-L-methionine from L-methionine: step 1/1. Catalyzes the formation of S-adenosylmethionine (AdoMet) from methionine and ATP. The overall synthetic reaction is composed of two sequential steps, AdoMet formation and the subsequent tripolyphosphate hydrolysis which occurs prior to release of AdoMet from the enzyme. The chain is S-adenosylmethionine synthase from Christiangramia forsetii (strain DSM 17595 / CGMCC 1.15422 / KT0803) (Gramella forsetii).